A 473-amino-acid chain; its full sequence is Bifunctional protein GlmU (473 aa).

The tract at residues 1-226 (MRAPVAVVIL…AGEASGINDL (226 aa)) is pyrophosphorylase. UDP-N-acetyl-alpha-D-glucosamine is bound by residues 10–13 (LAAG), K24, Q75, 80–81 (GT), 102–104 (YGD), G136, E151, N166, and N224. A Mg(2+)-binding site is contributed by D104. A Mg(2+)-binding site is contributed by N224. The interval 227–247 (VQLAEVEEAFQRRWARRLLQG) is linker. The N-acetyltransferase stretch occupies residues 248 to 473 (GLRLVAPHRF…TPASGGAKEE (226 aa)). Residues R330 and K348 each coordinate UDP-N-acetyl-alpha-D-glucosamine. The Proton acceptor role is filled by H360. Positions 363 and 374 each coordinate UDP-N-acetyl-alpha-D-glucosamine. Acetyl-CoA contacts are provided by residues A377, 383–384 (NY), S402, A420, and R437. A disordered region spans residues 439–473 (RARTIPGWQHPGLTGRRGPPDDNDATPASGGAKEE).

In the N-terminal section; belongs to the N-acetylglucosamine-1-phosphate uridyltransferase family. The protein in the C-terminal section; belongs to the transferase hexapeptide repeat family. In terms of assembly, homotrimer. Requires Mg(2+) as cofactor.

It is found in the cytoplasm. The enzyme catalyses alpha-D-glucosamine 1-phosphate + acetyl-CoA = N-acetyl-alpha-D-glucosamine 1-phosphate + CoA + H(+). It catalyses the reaction N-acetyl-alpha-D-glucosamine 1-phosphate + UTP + H(+) = UDP-N-acetyl-alpha-D-glucosamine + diphosphate. It participates in nucleotide-sugar biosynthesis; UDP-N-acetyl-alpha-D-glucosamine biosynthesis; N-acetyl-alpha-D-glucosamine 1-phosphate from alpha-D-glucosamine 6-phosphate (route II): step 2/2. Its pathway is nucleotide-sugar biosynthesis; UDP-N-acetyl-alpha-D-glucosamine biosynthesis; UDP-N-acetyl-alpha-D-glucosamine from N-acetyl-alpha-D-glucosamine 1-phosphate: step 1/1. The protein operates within bacterial outer membrane biogenesis; LPS lipid A biosynthesis. In terms of biological role, catalyzes the last two sequential reactions in the de novo biosynthetic pathway for UDP-N-acetylglucosamine (UDP-GlcNAc). The C-terminal domain catalyzes the transfer of acetyl group from acetyl coenzyme A to glucosamine-1-phosphate (GlcN-1-P) to produce N-acetylglucosamine-1-phosphate (GlcNAc-1-P), which is converted into UDP-GlcNAc by the transfer of uridine 5-monophosphate (from uridine 5-triphosphate), a reaction catalyzed by the N-terminal domain. This Halorhodospira halophila (strain DSM 244 / SL1) (Ectothiorhodospira halophila (strain DSM 244 / SL1)) protein is Bifunctional protein GlmU.